The sequence spans 160 residues: MLQNPTFWVLVAFVLFVAAVWRIAANTIGKALDDRAERIREEIEQAQKLREDAQAALAQYQRKQRDALKEAENIIAAAREEADRIRRRAATDLEASLRRREAQAMEKIAQAEAQAVQQVRDLAVDIAVAATERILVQNMDATRDEVLVGNAIAELPAKLH.

The chain crosses the membrane as a helical span at residues 5–25; the sequence is PTFWVLVAFVLFVAAVWRIAA.

It belongs to the ATPase B chain family. F-type ATPases have 2 components, F(1) - the catalytic core - and F(0) - the membrane proton channel. F(1) has five subunits: alpha(3), beta(3), gamma(1), delta(1), epsilon(1). F(0) has three main subunits: a(1), b(2) and c(10-14). The alpha and beta chains form an alternating ring which encloses part of the gamma chain. F(1) is attached to F(0) by a central stalk formed by the gamma and epsilon chains, while a peripheral stalk is formed by the delta and b chains.

The protein localises to the cell inner membrane. In terms of biological role, f(1)F(0) ATP synthase produces ATP from ADP in the presence of a proton or sodium gradient. F-type ATPases consist of two structural domains, F(1) containing the extramembraneous catalytic core and F(0) containing the membrane proton channel, linked together by a central stalk and a peripheral stalk. During catalysis, ATP synthesis in the catalytic domain of F(1) is coupled via a rotary mechanism of the central stalk subunits to proton translocation. Functionally, component of the F(0) channel, it forms part of the peripheral stalk, linking F(1) to F(0). The protein is ATP synthase subunit b 3 of Rhodospirillum centenum (strain ATCC 51521 / SW).